The following is a 102-amino-acid chain: Large ribosomal subunit protein bL21 (102 aa).

It belongs to the bacterial ribosomal protein bL21 family. Part of the 50S ribosomal subunit. Contacts protein L20.

This protein binds to 23S rRNA in the presence of protein L20. This chain is Large ribosomal subunit protein bL21, found in Clavibacter sepedonicus (Clavibacter michiganensis subsp. sepedonicus).